A 167-amino-acid chain; its full sequence is uncharacterized protein (167 aa).

The next 2 helical transmembrane spans lie at 96–115 (YVPA…FNFY) and 119–138 (WGAL…IIAV).

Its subcellular location is the cell membrane. This is an uncharacterized protein from Bacillus subtilis (strain 168).